The primary structure comprises 231 residues: uncharacterized protein (231 aa).

The next 3 membrane-spanning stretches (helical) occupy residues isoleucine 6–isoleucine 26, asparagine 39–serine 59, and phenylalanine 66–phenylalanine 86.

Its subcellular location is the cell membrane. This is an uncharacterized protein from Rickettsia prowazekii (strain Madrid E).